We begin with the raw amino-acid sequence, 374 residues long: tRNA-specific 2-thiouridylase MnmA (374 aa).

ATP is bound by residues G12–S19 and M38. The interval N98–D100 is interaction with target base in tRNA. C103 (nucleophile) is an active-site residue. C103 and C200 form a disulfide bridge. G127 contributes to the ATP binding site. The tract at residues K150–Q152 is interaction with tRNA. Catalysis depends on C200, which acts as the Cysteine persulfide intermediate. The tract at residues R311 to Y312 is interaction with tRNA.

This sequence belongs to the MnmA/TRMU family.

Its subcellular location is the cytoplasm. The enzyme catalyses S-sulfanyl-L-cysteinyl-[protein] + uridine(34) in tRNA + AH2 + ATP = 2-thiouridine(34) in tRNA + L-cysteinyl-[protein] + A + AMP + diphosphate + H(+). In terms of biological role, catalyzes the 2-thiolation of uridine at the wobble position (U34) of tRNA, leading to the formation of s(2)U34. This is tRNA-specific 2-thiouridylase MnmA from Lactiplantibacillus plantarum (strain ATCC BAA-793 / NCIMB 8826 / WCFS1) (Lactobacillus plantarum).